The following is a 717-amino-acid chain: DNA ligase (717 aa).

Residues 41–45, 90–91, and E124 each bind NAD(+); these read DARYD and SL. K126 (N6-AMP-lysine intermediate) is an active-site residue. The NAD(+) site is built by R147, E183, K299, and K323. Zn(2+)-binding residues include C428, C431, C446, and C452. In terms of domain architecture, BRCT spans 636–717; it reads ADYSPVAGKT…WLQLINEHHI (82 aa).

This sequence belongs to the NAD-dependent DNA ligase family. LigA subfamily. Requires Mg(2+) as cofactor. Mn(2+) is required as a cofactor.

The enzyme catalyses NAD(+) + (deoxyribonucleotide)n-3'-hydroxyl + 5'-phospho-(deoxyribonucleotide)m = (deoxyribonucleotide)n+m + AMP + beta-nicotinamide D-nucleotide.. In terms of biological role, DNA ligase that catalyzes the formation of phosphodiester linkages between 5'-phosphoryl and 3'-hydroxyl groups in double-stranded DNA using NAD as a coenzyme and as the energy source for the reaction. It is essential for DNA replication and repair of damaged DNA. The polypeptide is DNA ligase (Bartonella bacilliformis (strain ATCC 35685 / KC583 / Herrer 020/F12,63)).